A 461-amino-acid chain; its full sequence is Cysteine--tRNA ligase (461 aa).

Cysteine 28 is a binding site for Zn(2+). A 'HIGH' region motif is present at residues 30–40 (ITIYDLCHIGH). Zn(2+) is bound by residues cysteine 209, histidine 234, and glutamate 238. The 'KMSKS' region signature appears at 266–270 (KMSKS). Lysine 269 contributes to the ATP binding site.

Belongs to the class-I aminoacyl-tRNA synthetase family. In terms of assembly, monomer. It depends on Zn(2+) as a cofactor.

The protein localises to the cytoplasm. It carries out the reaction tRNA(Cys) + L-cysteine + ATP = L-cysteinyl-tRNA(Cys) + AMP + diphosphate. The polypeptide is Cysteine--tRNA ligase (Photorhabdus laumondii subsp. laumondii (strain DSM 15139 / CIP 105565 / TT01) (Photorhabdus luminescens subsp. laumondii)).